Reading from the N-terminus, the 323-residue chain is tRNA dimethylallyltransferase (323 aa).

12-19 (GPTAAGKT) contributes to the ATP binding site. 14–19 (TAAGKT) serves as a coordination point for substrate. 2 interaction with substrate tRNA regions span residues 37–40 (DSAL) and 161–165 (QRLIR).

The protein belongs to the IPP transferase family. In terms of assembly, monomer. Requires Mg(2+) as cofactor.

It carries out the reaction adenosine(37) in tRNA + dimethylallyl diphosphate = N(6)-dimethylallyladenosine(37) in tRNA + diphosphate. In terms of biological role, catalyzes the transfer of a dimethylallyl group onto the adenine at position 37 in tRNAs that read codons beginning with uridine, leading to the formation of N6-(dimethylallyl)adenosine (i(6)A). The sequence is that of tRNA dimethylallyltransferase from Pseudomonas putida (strain GB-1).